The primary structure comprises 200 residues: MPIPMVIESTGRAERAYDIYSRLLKDRIILLGTPVDDNVASLICAQLLFLESENPEKEIYLYINSPGGVVTAGLAIYDTMQYISAPVATLCMGQAASMGAFLLAAGQPGMRFALPNSRIMIHQPMGGAQGQATDIDIQAREILRLKDRLNEILSRHTGQPLEKIVEHTDRDYFMGPENAKNFGIIDRILTSRKDVEKDGK.

Ser97 functions as the Nucleophile in the catalytic mechanism. His122 is an active-site residue.

Belongs to the peptidase S14 family. In terms of assembly, fourteen ClpP subunits assemble into 2 heptameric rings which stack back to back to give a disk-like structure with a central cavity, resembling the structure of eukaryotic proteasomes.

It is found in the cytoplasm. It carries out the reaction Hydrolysis of proteins to small peptides in the presence of ATP and magnesium. alpha-casein is the usual test substrate. In the absence of ATP, only oligopeptides shorter than five residues are hydrolyzed (such as succinyl-Leu-Tyr-|-NHMec, and Leu-Tyr-Leu-|-Tyr-Trp, in which cleavage of the -Tyr-|-Leu- and -Tyr-|-Trp bonds also occurs).. In terms of biological role, cleaves peptides in various proteins in a process that requires ATP hydrolysis. Has a chymotrypsin-like activity. Plays a major role in the degradation of misfolded proteins. This is ATP-dependent Clp protease proteolytic subunit from Oleidesulfovibrio alaskensis (strain ATCC BAA-1058 / DSM 17464 / G20) (Desulfovibrio alaskensis).